The primary structure comprises 363 residues: Strychnine O-methyltransferase (363 aa).

S-adenosyl-L-methionine contacts are provided by Gly-204, Asp-227, Asp-249, Met-250, and Lys-263. Catalysis depends on His-267, which acts as the Proton acceptor.

This sequence belongs to the class I-like SAM-binding methyltransferase superfamily. Cation-independent O-methyltransferase family.

The catalysed reaction is 10-hydroxystrychnine + S-adenosyl-L-methionine = beta-colubrine + S-adenosyl-L-homocysteine + H(+). It carries out the reaction 11-demethylbrucine + S-adenosyl-L-methionine = brucine + S-adenosyl-L-homocysteine + H(+). Its pathway is alkaloid biosynthesis. Its function is as follows. O-methyltransferase involved in the biosynthesis of curare monoterpene indole alkaloids (MIAs), natural products such as strychnine, a neurotoxic compound used as a pesticide to control rodents, and its pharmacologically active derivatives, including brucine, used to regulate blood pressure. Curare alkaloids act as animal glycine receptor antagonists. Catalyzes the conversion of 10-OH strychnine to beta-colubrine, and of 11-deMe brucine to brucine. The sequence is that of Strychnine O-methyltransferase from Strychnos nux-vomica (Poison nut).